Consider the following 357-residue polypeptide: Aminomethyltransferase (357 aa).

Belongs to the GcvT family. The glycine cleavage system is composed of four proteins: P, T, L and H.

The catalysed reaction is N(6)-[(R)-S(8)-aminomethyldihydrolipoyl]-L-lysyl-[protein] + (6S)-5,6,7,8-tetrahydrofolate = N(6)-[(R)-dihydrolipoyl]-L-lysyl-[protein] + (6R)-5,10-methylene-5,6,7,8-tetrahydrofolate + NH4(+). Functionally, the glycine cleavage system catalyzes the degradation of glycine. This Deinococcus deserti (strain DSM 17065 / CIP 109153 / LMG 22923 / VCD115) protein is Aminomethyltransferase.